A 355-amino-acid polypeptide reads, in one-letter code: DNA-directed RNA polymerase subunit alpha (355 aa).

Positions M1–D248 are alpha N-terminal domain (alpha-NTD). The segment at Y267–D355 is alpha C-terminal domain (alpha-CTD).

Belongs to the RNA polymerase alpha chain family. Homodimer. The RNAP catalytic core consists of 2 alpha, 1 beta, 1 beta' and 1 omega subunit. When a sigma factor is associated with the core the holoenzyme is formed, which can initiate transcription.

The enzyme catalyses RNA(n) + a ribonucleoside 5'-triphosphate = RNA(n+1) + diphosphate. Its function is as follows. DNA-dependent RNA polymerase catalyzes the transcription of DNA into RNA using the four ribonucleoside triphosphates as substrates. This is DNA-directed RNA polymerase subunit alpha from Wolbachia pipientis wMel.